The following is a 162-amino-acid chain: MGLETEKADVQLFMDDDAYSHHSGVDFADPEKFPDTGPDRDPHGLNSHLKLGFEDVIAEPVTTHSFDKVWICSHALFEISKYVLYKFLTVFLAIPLAFAAGVLFAVLSCLHIWILMPFVKTCLMVLPSVQTIWRSVTDVVIAPLCASIGRSFSSVGLQLSHD.

At 1–86 (MGLETEKADV…FEISKYVLYK (86 aa)) the chain is on the cytoplasmic side. Residue Y19 is modified to Phosphotyrosine; by SRC. 2 positions are modified to phosphoserine: S20 and S23. The segment at residues 87-107 (FLTVFLAIPLAFAAGVLFAVL) is an intramembrane region (helical). The Cytoplasmic segment spans residues 108–162 (SCLHIWILMPFVKTCLMVLPSVQTIWRSVTDVVIAPLCASIGRSFSSVGLQLSHD).

It belongs to the caveolin family. In terms of assembly, monomer or homodimer. Interacts with CAV1; the interaction forms a stable heterooligomeric complex that is required for targeting to lipid rafts and for caveolae formation. Tyrosine phosphorylated forms do not form heterooligomers with the Tyr-19-phosphorylated form existing as a monomer or dimer. Interacts (tyrosine phosphorylated form) with the SH2 domain-containing proteins, RASA1, NCK1 and SRC. Interacts (tyrosine phosphorylated form) with INSR. Interacts (Tyr-19 phosphorylated form) with MAPK1 (phosphorylated form); the interaction, promoted by insulin, leads to nuclear location and MAPK1 activation. Interacts with STAT3; the interaction is increased on insulin-induced tyrosine phosphorylation leading to STAT activation. Phosphorylated on serine and tyrosine residues. CAV1 promotes phosphorylation on Ser-23 which then targets the complex to the plasma membrane, lipid rafts and caveolae. Phosphorylation on Tyr-19 is required for insulin-induced phosphorylation of MAPK1 and DNA binding of STAT3. Tyrosine phosphorylation is induced by both EGF and insulin.

The protein resides in the nucleus. It localises to the cytoplasm. The protein localises to the golgi apparatus membrane. Its subcellular location is the cell membrane. It is found in the membrane. The protein resides in the caveola. May act as a scaffolding protein within caveolar membranes. Interacts directly with G-protein alpha subunits and can functionally regulate their activity. Acts as an accessory protein in conjunction with CAV1 in targeting to lipid rafts and driving caveolae formation. Positive regulator of cellular mitogenesis of the MAPK signaling pathway. Required for the insulin-stimulated nuclear translocation and activation of MAPK1 and STAT3, and the subsequent regulation of cell cycle progression. The chain is Caveolin-2 (CAV2) from Oryctolagus cuniculus (Rabbit).